The primary structure comprises 333 residues: Phosphate acyltransferase (333 aa).

This sequence belongs to the PlsX family. In terms of assembly, homodimer. Probably interacts with PlsY.

It localises to the cytoplasm. The enzyme catalyses a fatty acyl-[ACP] + phosphate = an acyl phosphate + holo-[ACP]. It participates in lipid metabolism; phospholipid metabolism. In terms of biological role, catalyzes the reversible formation of acyl-phosphate (acyl-PO(4)) from acyl-[acyl-carrier-protein] (acyl-ACP). This enzyme utilizes acyl-ACP as fatty acyl donor, but not acyl-CoA. This is Phosphate acyltransferase from Desulforamulus reducens (strain ATCC BAA-1160 / DSM 100696 / MI-1) (Desulfotomaculum reducens).